A 95-amino-acid chain; its full sequence is Co-chaperonin GroES (95 aa).

This sequence belongs to the GroES chaperonin family. As to quaternary structure, heptamer of 7 subunits arranged in a ring. Interacts with the chaperonin GroEL.

It localises to the cytoplasm. Functionally, together with the chaperonin GroEL, plays an essential role in assisting protein folding. The GroEL-GroES system forms a nano-cage that allows encapsulation of the non-native substrate proteins and provides a physical environment optimized to promote and accelerate protein folding. GroES binds to the apical surface of the GroEL ring, thereby capping the opening of the GroEL channel. This chain is Co-chaperonin GroES, found in Pelodictyon phaeoclathratiforme (strain DSM 5477 / BU-1).